A 37-amino-acid polypeptide reads, in one-letter code: Photosystem I reaction center subunit VIII (37 aa).

Residues 7 to 27 traverse the membrane as a helical segment; sequence LPAIFVPLVGLVFPAIAMVSL.

The protein belongs to the PsaI family.

Its subcellular location is the plastid. It is found in the chloroplast thylakoid membrane. May help in the organization of the PsaL subunit. The protein is Photosystem I reaction center subunit VIII of Morus indica (Mulberry).